The sequence spans 528 residues: Capsid scaffolding protein (528 aa).

Catalysis depends on charge relay system residues histidine 46, serine 116, and histidine 135. Residues 270-288 (HGNYDAVESATATTAMSNQ) form an interaction with pAP region. Residues 394-432 (KKRHFQSDSEDELSFPGDPEYTKKRRRHKVDNDDDKEMA) are disordered. The Nuclear localization signal signature appears at 416–422 (KKRRRHK). Residues 508–528 (SMDLLKLNKKLFVDALNKMDS) are interaction with major capsid protein.

The protein belongs to the herpesviridae capsid scaffolding protein family. Homomultimer. Interacts with major capsid protein. As to quaternary structure, exists in a monomer-dimer equilibrium with the dimer being the active species. Capsid scaffolding protein is cleaved by assemblin after formation of the spherical procapsid. As a result, the capsid obtains its mature, icosahedral shape. Cleavages occur at two or more sites: release (R-site) and maturation (M-site).

It is found in the host cytoplasm. Its subcellular location is the host nucleus. The catalysed reaction is Cleaves -Ala-|-Ser- and -Ala-|-Ala- bonds in the scaffold protein.. Its function is as follows. Acts as a scaffold protein by binding major capsid protein in the cytoplasm, inducing the nuclear localization of both proteins. Multimerizes in the nucleus such as major capsid protein forms the icosahedral T=16 capsid. Autocatalytic cleavage releases the assembly protein, and subsequently abolishes interaction with major capsid protein. Cleavages products are evicted from the capsid before or during DNA packaging. Functionally, protease that plays an essential role in virion assembly within the nucleus. Catalyzes the cleavage of the assembly protein after formation of the spherical procapsid. By that cleavage, the capsid matures and gains its icosahedral shape. The cleavage sites seem to include -Ala-Ser-, -Ala-Ala-, as well as Ala-Thr bonds. Assemblin and cleavages products are evicted from the capsid before or during DNA packaging. Plays a major role in capsid assembly. Acts as a scaffold protein by binding major capsid protein. Multimerizes in the nucleus such as major capsid protein forms the icosahedral T=16 capsid. Cleaved by assemblin after capsid completion. The cleavages products are evicted from the capsid before or during DNA packaging. This chain is Capsid scaffolding protein (U53), found in Homo sapiens (Human).